The following is a 233-amino-acid chain: Octanoyltransferase (233 aa).

The region spanning 33–216 (GRAQDTVILL…HLVRALSSNG (184 aa)) is the BPL/LPL catalytic domain. Residues 71 to 78 (RGGRITWH), 146 to 148 (AIG), and 159 to 161 (GFA) contribute to the substrate site. C177 (acyl-thioester intermediate) is an active-site residue.

Belongs to the LipB family.

It is found in the cytoplasm. It catalyses the reaction octanoyl-[ACP] + L-lysyl-[protein] = N(6)-octanoyl-L-lysyl-[protein] + holo-[ACP] + H(+). Its pathway is protein modification; protein lipoylation via endogenous pathway; protein N(6)-(lipoyl)lysine from octanoyl-[acyl-carrier-protein]: step 1/2. Its function is as follows. Catalyzes the transfer of endogenously produced octanoic acid from octanoyl-acyl-carrier-protein onto the lipoyl domains of lipoate-dependent enzymes. Lipoyl-ACP can also act as a substrate although octanoyl-ACP is likely to be the physiological substrate. In Clavibacter michiganensis subsp. michiganensis (strain NCPPB 382), this protein is Octanoyltransferase.